A 567-amino-acid polypeptide reads, in one-letter code: Proline--tRNA ligase (567 aa).

This sequence belongs to the class-II aminoacyl-tRNA synthetase family. ProS type 1 subfamily. Homodimer.

It localises to the cytoplasm. The enzyme catalyses tRNA(Pro) + L-proline + ATP = L-prolyl-tRNA(Pro) + AMP + diphosphate. Catalyzes the attachment of proline to tRNA(Pro) in a two-step reaction: proline is first activated by ATP to form Pro-AMP and then transferred to the acceptor end of tRNA(Pro). As ProRS can inadvertently accommodate and process non-cognate amino acids such as alanine and cysteine, to avoid such errors it has two additional distinct editing activities against alanine. One activity is designated as 'pretransfer' editing and involves the tRNA(Pro)-independent hydrolysis of activated Ala-AMP. The other activity is designated 'posttransfer' editing and involves deacylation of mischarged Ala-tRNA(Pro). The misacylated Cys-tRNA(Pro) is not edited by ProRS. The chain is Proline--tRNA ligase from Geobacillus thermodenitrificans (strain NG80-2).